The primary structure comprises 541 residues: Chaperonin GroEL (541 aa).

ATP-binding positions include 29-32 (TLGP), 86-90 (DGTTT), G413, and D494.

It belongs to the chaperonin (HSP60) family. In terms of assembly, forms a cylinder of 14 subunits composed of two heptameric rings stacked back-to-back. Interacts with the co-chaperonin GroES.

It is found in the cytoplasm. The enzyme catalyses ATP + H2O + a folded polypeptide = ADP + phosphate + an unfolded polypeptide.. Functionally, together with its co-chaperonin GroES, plays an essential role in assisting protein folding. The GroEL-GroES system forms a nano-cage that allows encapsulation of the non-native substrate proteins and provides a physical environment optimized to promote and accelerate protein folding. In Acetivibrio thermocellus (strain ATCC 27405 / DSM 1237 / JCM 9322 / NBRC 103400 / NCIMB 10682 / NRRL B-4536 / VPI 7372) (Clostridium thermocellum), this protein is Chaperonin GroEL.